Here is a 240-residue protein sequence, read N- to C-terminus: EF-hand domain-containing protein D2 (240 aa).

The interval M1 to A51 is disordered. A2 is subject to N-acetylalanine. S11 bears the Phosphoserine mark. Over residues A32 to A47 the composition is skewed to low complexity. Phosphoserine is present on residues S74 and S76. Y83 is modified (phosphotyrosine). EF-hand domains lie at K92–P127 and Q128–G163. Residues D105, D109, E116, D141, D143, D145, K147, and E152 each contribute to the Ca(2+) site. K233 is subject to N6-acetyllysine.

As to quaternary structure, interacts with CASP9; with inactive form. As to expression, detected in thymus, kidney, spleen, lung, liver and brain. Highest abundance in brain and lowest in kidney and thymus.

Its subcellular location is the membrane raft. May regulate B-cell receptor (BCR)-induced immature and primary B-cell apoptosis. Plays a role as negative regulator of the canonical NF-kappa-B-activating branch. Controls spontaneous apoptosis through the regulation of BCL2L1 abundance. The protein is EF-hand domain-containing protein D2 (Efhd2) of Mus musculus (Mouse).